A 486-amino-acid polypeptide reads, in one-letter code: MNETEYFVVDTPGFEDEGGAWATFCEIAQLLDHIREHAVIVAIFFVTPINIFKRRPDPFEEKLYTWLREMSGERFMKYVTFVTTFWEAHNPDQLERYNDFLVRRKEQEWARFIKHGAQTYQFGKVYSAGVETTLHWDTDAEQLAAQAREMIRVYCHEIPIIQPLILHELNMNMGLGSTAAGQVLWPAGDGGTNDQGPSRAQSTASSGGSGRPRSTESPQSGAQASTTPTSPPTTQSTGDDPAAPGGWAWFREFAWEITKRYGPQIVEHVINRQFGSAGAIIGGNGGDFASSMQCMSAKGFDINSVTDTAKFFGKASDMGSRGPNGPIGNGPIIFSIKLQGSYFAQFLNRWQNEDIQAFDPKVDAVNDFMEQKDLFMETTVWNTHCQSWYKSRQTGKITALWPGSTLHYMETLAKPRYDDFDITYASKNRFAYLGNGFSQDELNPQADITYYIRDKDDGLSVFGNLFSTYNAKDIGDKMTALADRAI.

Residues 186-243 (PAGDGGTNDQGPSRAQSTASSGGSGRPRSTESPQSGAQASTTPTSPPTTQSTGDDPAA) form a disordered region. Polar residues predominate over residues 194-206 (DQGPSRAQSTASS). The segment covering 220 to 241 (SGAQASTTPTSPPTTQSTGDDP) has biased composition (low complexity).

The protein belongs to the FAD-binding monooxygenase family. Homodimer. It depends on FAD as a cofactor.

In terms of biological role, probable FAD-binding monooxygenase; part of the gene cluster that mediates the biosynthesis of luteodienoside A, a glycosylated polyketide consisting of an unusual 1-O-beta-D-glucopyranosyl-myo-inositol (glucinol) ester of 3-hydroxy-2,2,4-trimethylocta-4,6-dienoic acid. The HR-PKS ltbA produces the trimethylated polyketide chain from acetyl-CoA, malonyl-CoA and S-adenosylmethionine (SAM), and the ltbA cAT domain then uses glucinol produced by the glycosyltransferase ltbB as an offloading substrate to release luteodienoside A. Since ltbA and ltbB are sufficient for the biosynthesis of luteodienoside A, the functions of the methyltransferase ltbC and the FAD-binding monooxygenase ltbD within the pathway remain obscur. This Aspergillus luteorubrus protein is Probable FAD-binding monooxygenase ltbD.